The following is a 335-amino-acid chain: Biotin synthase (335 aa).

A Radical SAM core domain is found at 46–274 (YNIQLASLFS…KSKIRLSAGR (229 aa)). [4Fe-4S] cluster is bound by residues Cys-61, Cys-65, and Cys-68. 4 residues coordinate [2Fe-2S] cluster: Cys-105, Cys-137, Cys-197, and Arg-269.

The protein belongs to the radical SAM superfamily. Biotin synthase family. As to quaternary structure, homodimer. It depends on [4Fe-4S] cluster as a cofactor. [2Fe-2S] cluster is required as a cofactor.

The catalysed reaction is (4R,5S)-dethiobiotin + (sulfur carrier)-SH + 2 reduced [2Fe-2S]-[ferredoxin] + 2 S-adenosyl-L-methionine = (sulfur carrier)-H + biotin + 2 5'-deoxyadenosine + 2 L-methionine + 2 oxidized [2Fe-2S]-[ferredoxin]. It functions in the pathway cofactor biosynthesis; biotin biosynthesis; biotin from 7,8-diaminononanoate: step 2/2. Its function is as follows. Catalyzes the conversion of dethiobiotin (DTB) to biotin by the insertion of a sulfur atom into dethiobiotin via a radical-based mechanism. The sequence is that of Biotin synthase from Prochlorococcus marinus (strain MIT 9312).